Here is a 320-residue protein sequence, read N- to C-terminus: o-succinylbenzoate synthase (320 aa).

Catalysis depends on K133, which acts as the Proton donor. The Mg(2+) site is built by D161, E190, and D213. K235 serves as the catalytic Proton acceptor.

It belongs to the mandelate racemase/muconate lactonizing enzyme family. MenC type 1 subfamily. A divalent metal cation is required as a cofactor.

The enzyme catalyses (1R,6R)-6-hydroxy-2-succinyl-cyclohexa-2,4-diene-1-carboxylate = 2-succinylbenzoate + H2O. The protein operates within quinol/quinone metabolism; 1,4-dihydroxy-2-naphthoate biosynthesis; 1,4-dihydroxy-2-naphthoate from chorismate: step 4/7. Its pathway is quinol/quinone metabolism; menaquinone biosynthesis. Converts 2-succinyl-6-hydroxy-2,4-cyclohexadiene-1-carboxylate (SHCHC) to 2-succinylbenzoate (OSB). The chain is o-succinylbenzoate synthase from Escherichia coli (strain SMS-3-5 / SECEC).